Consider the following 386-residue polypeptide: Formate-dependent phosphoribosylglycinamide formyltransferase (386 aa).

N(1)-(5-phospho-beta-D-ribosyl)glycinamide is bound by residues 15–16 (EL) and E75. ATP is bound by residues R107, K148, 153–158 (SSGKGQ), 188–191 (EQFI), and E196. Positions 112-301 (ALAAQQLNLQ…EFELHLRAIV (190 aa)) constitute an ATP-grasp domain. Mg(2+) contacts are provided by E260 and E272. N(1)-(5-phospho-beta-D-ribosyl)glycinamide is bound by residues D279, K349, and 356 to 357 (RR).

It belongs to the PurK/PurT family. In terms of assembly, homodimer.

The catalysed reaction is N(1)-(5-phospho-beta-D-ribosyl)glycinamide + formate + ATP = N(2)-formyl-N(1)-(5-phospho-beta-D-ribosyl)glycinamide + ADP + phosphate + H(+). Its pathway is purine metabolism; IMP biosynthesis via de novo pathway; N(2)-formyl-N(1)-(5-phospho-D-ribosyl)glycinamide from N(1)-(5-phospho-D-ribosyl)glycinamide (formate route): step 1/1. Involved in the de novo purine biosynthesis. Catalyzes the transfer of formate to 5-phospho-ribosyl-glycinamide (GAR), producing 5-phospho-ribosyl-N-formylglycinamide (FGAR). Formate is provided by PurU via hydrolysis of 10-formyl-tetrahydrofolate. In Francisella tularensis subsp. tularensis (strain SCHU S4 / Schu 4), this protein is Formate-dependent phosphoribosylglycinamide formyltransferase.